The sequence spans 265 residues: 4-hydroxy-2-oxo-heptane-1,7-dioate aldolase (265 aa).

Residue His45 is the Proton acceptor of the active site. Gln147 contacts substrate. Glu149 provides a ligand contact to a divalent metal cation. Positions 174 and 175 each coordinate substrate. Asp175 lines the a divalent metal cation pocket.

Belongs to the HpcH/HpaI aldolase family. Homohexamer; trimer of dimers. A divalent metal cation is required as a cofactor.

The enzyme catalyses 4-hydroxy-2-oxoheptanedioate = succinate semialdehyde + pyruvate. The protein operates within aromatic compound metabolism; 4-hydroxyphenylacetate degradation; pyruvate and succinate semialdehyde from 4-hydroxyphenylacetate: step 7/7. Its function is as follows. Catalyzes the reversible retro-aldol cleavage of 4-hydroxy-2-ketoheptane-1,7-dioate (HKHD) to pyruvate and succinic semialdehyde. This Klebsiella pneumoniae subsp. pneumoniae (strain ATCC 700721 / MGH 78578) protein is 4-hydroxy-2-oxo-heptane-1,7-dioate aldolase.